Reading from the N-terminus, the 852-residue chain is Genome polyprotein (852 aa).

2 short sequence motifs ((L)YPX(n)L motif) span residues 167–171 and 200–205; these read YPHGL and YPVWEL. An involved in P1-2A pentamerization region spans residues 766–836; sequence MMSRIAAGDL…PRKMKGLFSQ (71 aa).

This sequence belongs to the picornaviridae polyprotein family. In terms of assembly, homodimer. Homomultimer; probably interacts with membranes in a multimeric form. Seems to assemble into amyloid-like fibers. As to quaternary structure, homopentamer. Homooligomer. Interacts with capsid protein VP2. Interacts with capsid protein VP3. In terms of assembly, interacts with capsid protein VP1. Interacts with capsid protein VP3. As to quaternary structure, interacts with capsid protein VP1. Interacts with capsid protein VP2. Specific enzymatic cleavages by viral protease in vivo yield a variety of precursors and mature proteins. Polyprotein processing intermediates are produced, such as P1-2A which is a functional precursor of the structural proteins, VP0 which is a VP4-VP2 precursor, VP1-2A precursor, 3ABC precursor which is a stable and catalytically active precursor of 3A, 3B and 3C proteins, 3AB and 3CD precursors. The assembly signal 2A is removed from VP1-2A by a host protease, possibly host Cathepsin L. This cleavage occurs over a region of 3 amino-acids probably generating VP1 proteins with heterogeneous C-termini. In terms of processing, during virion maturation, immature virions are rendered infectious following cleavage of VP0 into VP4 and VP2. This maturation seems to be an autocatalytic event triggered by the presence of RNA in the capsid and is followed by a conformational change of the particle. Post-translationally, the assembly signal 2A is removed from VP1-2A by a host protease, possibly host Cathepsin L in naked virions. This cleavage does not occur in enveloped virions. This cleavage occurs over a region of 3 amino-acids probably generating VP1 proteins with heterogeneous C-termini. Viral protein genome-linked: VPg is uridylylated prior to priming replication into VPg-pUpU. In terms of processing, unlike other picornaviruses, does not seem to be myristoylated.

It localises to the virion. The protein resides in the host endosome. It is found in the host multivesicular body. Its subcellular location is the host membrane. Its function is as follows. Capsid proteins VP1, VP2, and VP3 form a closed capsid enclosing the viral positive strand RNA genome. All these proteins contain a beta-sheet structure called beta-barrel jelly roll. Together they form an icosahedral capsid (T=3) composed of 60 copies of each VP1, VP2, and VP3, with a diameter of approximately 300 Angstroms. VP1 is situated at the 12 fivefold axes, whereas VP2 and VP3 are located at the quasi-sixfold axes. The naked capsid interacts with the host receptor HAVCR1 to provide virion attachment to and probably entry into the target cell. VP0 precursor is a component of the immature procapsids. In terms of biological role, plays a role in the assembly of the 12 pentamers into an icosahedral structure. Has not been detected in mature virions, supposedly owing to its small size. Functionally, precursor component of immature procapsids that corresponds to an extended form of the structural protein VP1. After maturation, possibly by the host Cathepsin L, the assembly signal 2A is cleaved to give rise to the mature VP1 protein. Its function is as follows. Affects membrane integrity and causes an increase in membrane permeability. Functions as a viroporin. Affects membrane integrity and causes an increase in membrane permeability. Involved in host intracellular membrane rearrangements probably to give rise to the viral factories. Does not disrupt calcium homeostasis or glycoprotein trafficking. Antagonizes the innate immune response of the host by suppressing IFN-beta synthesis, which it achieves by interfering with the RIG-I/IFIH1 pathway. The sequence is that of Genome polyprotein from Cercopithecus hamlyni (Owl-faced monkey).